Here is a 449-residue protein sequence, read N- to C-terminus: Glycosyl hydrolase-like protein 1 (449 aa).

A beta-D-glucoside contacts are provided by residues Q22, H119, 164-165 (NE), Y292, E350, W393, and Y406. E165 serves as the catalytic Proton donor. The active-site Nucleophile is E350.

This sequence belongs to the glycosyl hydrolase 1 family. In terms of tissue distribution, mainly expressed in flowers, flower buds and young leaves, and, to a lesser extent, in old leaves, stems and roots.

Its subcellular location is the cytoplasm. It participates in secondary metabolite biosynthesis; terpenoid biosynthesis. In terms of biological role, component of the oleanane-type triterpene saponins (e.g. saponarioside A and saponarioside B) biosynthetic pathway, leading to the production of natural products with detergent properties used as traditional sources of soap. Beta-glycosidase that catalyzes the transfer of glucose moiety to QA-triFRXX to produce QA-triF(Q)RXX via the elongation of the C-28 sugar chain with a D-quinovose. The sequence is that of Glycosyl hydrolase-like protein 1 from Saponaria officinalis (Common soapwort).